The primary structure comprises 552 residues: Rhodopsin kinase GRK7 (552 aa).

Phosphoserine; by PKA is present on Ser-36. The RGS domain maps to 56–176 (FHSLCEQQPI…LASPFYDKFL (121 aa)). A Protein kinase domain is found at 191-454 (FEEFRVLGKG…SDDPRKHHFF (264 aa)). Residues 197–205 (LGKGGFGEV) and Lys-220 each bind ATP. The active-site Proton acceptor is the Asp-316. Residues 455–520 (KTINFPRLEA…GAVPIAWQEE (66 aa)) enclose the AGC-kinase C-terminal domain. Cys-549 is subject to Cysteine methyl ester. Cys-549 carries the S-geranylgeranyl cysteine lipid modification. Positions 550–552 (LLL) are cleaved as a propeptide — removed in mature form.

Belongs to the protein kinase superfamily. AGC Ser/Thr protein kinase family. GPRK subfamily. In terms of assembly, interacts (when prenylated) with PDE6D; this promotes release from membranes. Autophosphorylated in vitro at Ser-490. Phosphorylation at Ser-36 is regulated by light and activated by cAMP.

It localises to the membrane. The catalysed reaction is L-threonyl-[rhodopsin] + ATP = O-phospho-L-threonyl-[rhodopsin] + ADP + H(+). It catalyses the reaction L-seryl-[rhodopsin] + ATP = O-phospho-L-seryl-[rhodopsin] + ADP + H(+). Inhibited by phosphorylation of Ser-36. Retina-specific kinase involved in the shutoff of the photoresponse and adaptation to changing light conditions via cone opsin phosphorylation, including rhodopsin (RHO). This is Rhodopsin kinase GRK7 (GRK7) from Bos taurus (Bovine).